A 154-amino-acid chain; its full sequence is Transcription antitermination protein NusB (154 aa).

Belongs to the NusB family.

Its function is as follows. Involved in transcription antitermination. Required for transcription of ribosomal RNA (rRNA) genes. Binds specifically to the boxA antiterminator sequence of the ribosomal RNA (rrn) operons. This is Transcription antitermination protein NusB from Bordetella parapertussis (strain 12822 / ATCC BAA-587 / NCTC 13253).